The primary structure comprises 196 residues: Sulfur-rich protein (196 aa).

A run of 3 helical transmembrane segments spans residues 34–54, 76–96, and 105–125; these read VTAGLQAITSSPGMVNLLIGW, ITLLVLGILLVVAGLACMFIF, and FWLIIPAAIGLIKLLVTSLCF.

It is found in the membrane. The sequence is that of Sulfur-rich protein (srp) from Chlamydia pneumoniae (Chlamydophila pneumoniae).